The primary structure comprises 641 residues: Forkhead box protein P4 (641 aa).

Disordered regions lie at residues 1–43 (MMVE…NGEL) and 239–264 (SFPT…RRES). Polar residues-rich tracts occupy residues 8–27 (IRST…QSDS) and 239–259 (SFPT…NGQN). A C2H2-type zinc finger spans residues 278 to 303 (GECRWPGCEALCEDMGQFIKHLNTEH). The tract at residues 320–341 (VQQLEIQLAKESERLQAMMTHL) is leucine-zipper. The interval 354-358 (PLNLV) is ctbp1-binding. The fork-head DNA-binding region spans 436–526 (RPPFTYASLI…PPKMTGSPTL (91 aa)). The segment at 563-641 (SSGSVLHGGH…ESESPMEDLP (79 aa)) is disordered. Residues 576–599 (TSTGEPGNSNGSSPRLSPQYSQSI) are compositionally biased toward polar residues. Positions 600–611 (HVKEEPAEDDVR) are enriched in basic and acidic residues. Positions 629-641 (RDLESESPMEDLP) are enriched in acidic residues.

Dimerization is required for DNA-binding. First expressed in the anterior neural field of stage 15 embryos. At stage 18, localized in three domains of the brain (rostral forebrain, midbrain and hindbrain) and in the eye anlage. Cerebral and retinal expression persists at later stages with additional expression in the branchial arches, at the base of the hatching gland, and in the pancreas.

The protein localises to the nucleus. In terms of biological role, transcriptional repressor. The polypeptide is Forkhead box protein P4 (Xenopus laevis (African clawed frog)).